The following is a 472-amino-acid chain: Adenosylhomocysteinase (472 aa).

3 residues coordinate substrate: Thr61, Asp136, and Glu196. 197–199 (TTT) is a binding site for NAD(+). Positions 226 and 230 each coordinate substrate. NAD(+) is bound by residues Asn231, 260-265 (GYGDVG), Glu283, Asn318, 339-341 (IGH), and Asn384.

This sequence belongs to the adenosylhomocysteinase family. It depends on NAD(+) as a cofactor.

Its subcellular location is the cytoplasm. It carries out the reaction S-adenosyl-L-homocysteine + H2O = L-homocysteine + adenosine. Its pathway is amino-acid biosynthesis; L-homocysteine biosynthesis; L-homocysteine from S-adenosyl-L-homocysteine: step 1/1. In terms of biological role, may play a key role in the regulation of the intracellular concentration of adenosylhomocysteine. The sequence is that of Adenosylhomocysteinase from Cupriavidus pinatubonensis (strain JMP 134 / LMG 1197) (Cupriavidus necator (strain JMP 134)).